An 80-amino-acid chain; its full sequence is Small ribosomal subunit protein bS18 (80 aa).

This sequence belongs to the bacterial ribosomal protein bS18 family. As to quaternary structure, part of the 30S ribosomal subunit. Forms a tight heterodimer with protein bS6.

In terms of biological role, binds as a heterodimer with protein bS6 to the central domain of the 16S rRNA, where it helps stabilize the platform of the 30S subunit. This is Small ribosomal subunit protein bS18 from Staphylococcus haemolyticus (strain JCSC1435).